The chain runs to 331 residues: Phosphoribosylformylglycinamidine cyclo-ligase (331 aa).

Belongs to the AIR synthase family.

The protein localises to the cytoplasm. The catalysed reaction is 2-formamido-N(1)-(5-O-phospho-beta-D-ribosyl)acetamidine + ATP = 5-amino-1-(5-phospho-beta-D-ribosyl)imidazole + ADP + phosphate + H(+). It functions in the pathway purine metabolism; IMP biosynthesis via de novo pathway; 5-amino-1-(5-phospho-D-ribosyl)imidazole from N(2)-formyl-N(1)-(5-phospho-D-ribosyl)glycinamide: step 2/2. The polypeptide is Phosphoribosylformylglycinamidine cyclo-ligase (Clostridium tetani (strain Massachusetts / E88)).